Consider the following 233-residue polypeptide: UPF0758 protein SRU_2338 (233 aa).

One can recognise an MPN domain in the interval 110–232 (QVTCPADVAD…HTSLAERGVI (123 aa)). Positions 181, 183, and 194 each coordinate Zn(2+). The JAMM motif motif lies at 181-194 (HNHPSGNPEPSRED).

It belongs to the UPF0758 family.

The sequence is that of UPF0758 protein SRU_2338 from Salinibacter ruber (strain DSM 13855 / M31).